Reading from the N-terminus, the 932-residue chain is Protocadherin gamma-A8 (932 aa).

Residues 1-29 (MAAPQSRPRRGELILLCALLGTLWEIGRG) form the signal peptide. Cadherin domains follow at residues 30 to 133 (QIRY…NPKF), 134 to 242 (QVED…APVF), 243 to 347 (PHPI…RPEV), 348 to 452 (IITS…PPTF), 453 to 562 (PHAS…APEI), and 570 to 682 (DGST…KPSV). Topologically, residues 30 to 692 (QIRYSVPEET…DPNDSSLTLY (663 aa)) are extracellular. A glycan (N-linked (GlcNAc...) asparagine) is linked at asparagine 47. Residues asparagine 414, asparagine 419, and asparagine 545 are each glycosylated (N-linked (GlcNAc...) asparagine). N-linked (GlcNAc...) asparagine glycosylation is present at asparagine 685. The chain crosses the membrane as a helical span at residues 693–713 (LVVAVAAISCVFLAFVAVLLG). Over 714–932 (LRLRRWHKSR…KKKSGKKEKK (219 aa)) the chain is Cytoplasmic. Disordered stretches follow at residues 804–841 (ADHG…WPNN) and 902–932 (ATLT…KEKK). Over residues 810–841 (APPNTDWRFSQAQRPGTSGSQNGDDTGTWPNN) the composition is skewed to polar residues. Positions 922-932 (NKKKSGKKEKK) are enriched in basic residues.

The protein localises to the cell membrane. Its function is as follows. Potential calcium-dependent cell-adhesion protein. May be involved in the establishment and maintenance of specific neuronal connections in the brain. This is Protocadherin gamma-A8 (PCDHGA8) from Homo sapiens (Human).